We begin with the raw amino-acid sequence, 722 residues long: Solute carrier organic anion transporter family member 4A1 (722 aa).

The segment at 1-52 (MPLHQLGDKPLTFPSPNSAMENGLDHTPPSRRASPGTPLSPGSLRSAAHSPL) is disordered. At 1–103 (MPLHQLGDKP…PCLQVLNTPK (103 aa)) the chain is on the cytoplasmic side. At Ser34 the chain carries Phosphoserine. At Thr37 the chain carries Phosphothreonine. Phosphoserine occurs at positions 40, 43, 46, and 50. Residues 104 to 124 (GILFFLCAAAFLQGMTVNGFI) form a helical membrane-spanning segment. The Extracellular segment spans residues 125-143 (NTVITSLERRYDLHSYQSG). A helical membrane pass occupies residues 144 to 164 (LIASSYDIAACLCLTFVSYFG). At 165-170 (GSGHKP) the chain is on the cytoplasmic side. Residues 171-195 (RWLGWGVLLMGTGSLVFALPHFTAG) form a helical membrane-spanning segment. Over 196–222 (RYEVELDAGVRTCPANPGAVCADSTSG) the chain is Extracellular. The chain crosses the membrane as a helical span at residues 223 to 253 (LSRYQLVFMLGQFLHGVGATPLYTLGVTYLD). Residues 254–272 (ENVKSSCSPVYIAIFYTAA) lie on the Cytoplasmic side of the membrane. Residues 273–293 (ILGPAAGYLIGGALLNIYTEM) form a helical membrane-spanning segment. Residues 294–307 (GRRTELTTESPLWV) are Extracellular-facing. The chain crosses the membrane as a helical span at residues 308-332 (GAWWVGFLGSGAAAFFTAVPILGYP). The Cytoplasmic segment spans residues 333-378 (RQLPGSQRYAVMRAAEMHQLKDSSRGEASNPDFGKTIRDLPLSIWL). A helical transmembrane segment spans residues 379–400 (LLKNPTFILLCLAGATEATLIT). The Extracellular segment spans residues 401–420 (GMSTFSPKFLESQFSLSASE). The chain crosses the membrane as a helical span at residues 421-444 (AATLFGYLVVPAGGGGTFLGGFFV). Residues 445–448 (NKLR) lie on the Cytoplasmic side of the membrane. Residues 449 to 471 (LRGSAVIKFCLFCTVVSLLGILV) traverse the membrane as a helical segment. Residues 472–580 (FSLHCPSVPM…TSTCQRKPLL (109 aa)) lie on the Extracellular side of the membrane. The 58-residue stretch at 498–555 (LNLTAPCNAACSCQPEHYSPVCGSDGLMYFSLCHAGCPAATETNVDGQKVYRDCSCIP) folds into the Kazal-like domain. A glycan (N-linked (GlcNAc...) asparagine) is linked at Asn499. Cystine bridges form between Cys504-Cys534, Cys510-Cys530, and Cys519-Cys553. Residue Asn557 is glycosylated (N-linked (GlcNAc...) asparagine). A helical transmembrane segment spans residues 581–603 (LVFIFVVIFFTFLSSIPALTATL). At 604–612 (RCVRDPQRS) the chain is on the cytoplasmic side. A helical transmembrane segment spans residues 613–638 (FALGIQWIVVRILGGIPGPIAFGWVI). Residues 639 to 671 (DKACLLWQDQCGQQGSCLVYQNSAMSRYILIMG) are Extracellular-facing. The helical transmembrane segment at 672-689 (LLYKVLGVLFFAIACFLY) threads the bilayer. At 690–722 (KPLSESSDGLETCLPSQSSAPDSATDSQLQSSV) the chain is on the cytoplasmic side. The segment at 703–722 (LPSQSSAPDSATDSQLQSSV) is disordered.

This sequence belongs to the organo anion transporter (TC 2.A.60) family. Widely expressed. Expressed in placental trophoblasts. Expressed in pancreas, kidney, skeletal muscle, liver, lung, brain, heart, colon, small intestine, ovary, testis, prostate, thymus and spleen. In testis, primarily localized to Leydig cells.

It is found in the cell membrane. It carries out the reaction 3,3',5-triiodo-L-thyronine(out) + L-glutamate(in) = 3,3',5-triiodo-L-thyronine(in) + L-glutamate(out). The catalysed reaction is L-thyroxine(out) + L-glutamate(in) = L-thyroxine(in) + L-glutamate(out). The enzyme catalyses estrone 3-sulfate(out) + L-glutamate(in) = estrone 3-sulfate(in) + L-glutamate(out). It catalyses the reaction taurocholate(out) + L-glutamate(in) = taurocholate(in) + L-glutamate(out). It carries out the reaction 3,3',5-triiodo-L-thyronine(out) = 3,3',5-triiodo-L-thyronine(in). The catalysed reaction is L-thyroxine(out) = L-thyroxine(in). The enzyme catalyses 3,3',5'-triiodo-L-thyronine(out) = 3,3',5'-triiodo-L-thyronine(in). It catalyses the reaction estrone 3-sulfate(out) = estrone 3-sulfate(in). It carries out the reaction 17beta-estradiol 17-O-(beta-D-glucuronate)(out) = 17beta-estradiol 17-O-(beta-D-glucuronate)(in). The catalysed reaction is taurocholate(out) = taurocholate(in). The enzyme catalyses prostaglandin E2(out) = prostaglandin E2(in). In terms of biological role, organic anion antiporter with apparent broad substrate specificity. Recognizes various substrates including thyroid hormones 3,3',5-triiodo-L-thyronine (T3), L-thyroxine (T4) and 3,3',5'-triiodo-L-thyronine (rT3), conjugated steroids such as estrone 3-sulfate and estradiol 17-beta glucuronide, bile acids such as taurocholate and prostanoids such as prostaglandin E2, likely operating in a tissue-specific manner. May be involved in uptake of metabolites from the circulation into organs such as kidney, liver or placenta. Possibly drives the selective transport of thyroid hormones and estrogens coupled to an outward glutamate gradient across the microvillous membrane of the placenta. The transport mechanism, its electrogenicity and potential tissue-specific counterions remain to be elucidated. The chain is Solute carrier organic anion transporter family member 4A1 (SLCO4A1) from Homo sapiens (Human).